Reading from the N-terminus, the 373-residue chain is Lipoyl synthase (373 aa).

The segment at 12 to 36 is disordered; that stretch reads HVVSNDHPSSSPLQPGVKQSGEDKI. 7 residues coordinate [4Fe-4S] cluster: cysteine 81, cysteine 86, cysteine 92, cysteine 107, cysteine 111, cysteine 114, and serine 323. The Radical SAM core domain occupies 93–312; sequence FSHGTATFMI…EEYGMALGFS (220 aa). Residues 346–373 are disordered; that stretch reads PAVSSTEHRERHTIASKSASKTESIRHR.

This sequence belongs to the radical SAM superfamily. Lipoyl synthase family. The cofactor is [4Fe-4S] cluster.

The protein localises to the cytoplasm. It carries out the reaction [[Fe-S] cluster scaffold protein carrying a second [4Fe-4S](2+) cluster] + N(6)-octanoyl-L-lysyl-[protein] + 2 oxidized [2Fe-2S]-[ferredoxin] + 2 S-adenosyl-L-methionine + 4 H(+) = [[Fe-S] cluster scaffold protein] + N(6)-[(R)-dihydrolipoyl]-L-lysyl-[protein] + 4 Fe(3+) + 2 hydrogen sulfide + 2 5'-deoxyadenosine + 2 L-methionine + 2 reduced [2Fe-2S]-[ferredoxin]. It functions in the pathway protein modification; protein lipoylation via endogenous pathway; protein N(6)-(lipoyl)lysine from octanoyl-[acyl-carrier-protein]: step 2/2. Catalyzes the radical-mediated insertion of two sulfur atoms into the C-6 and C-8 positions of the octanoyl moiety bound to the lipoyl domains of lipoate-dependent enzymes, thereby converting the octanoylated domains into lipoylated derivatives. This Xylella fastidiosa (strain 9a5c) protein is Lipoyl synthase.